Here is a 212-residue protein sequence, read N- to C-terminus: Uracil phosphoribosyltransferase (212 aa).

5-phospho-alpha-D-ribose 1-diphosphate contacts are provided by residues Arg-78, Arg-103, and Asp-130 to Ser-138. Uracil-binding positions include Ile-193 and Gly-198–Ala-200. Asp-199 lines the 5-phospho-alpha-D-ribose 1-diphosphate pocket.

This sequence belongs to the UPRTase family. Mg(2+) serves as cofactor.

The catalysed reaction is UMP + diphosphate = 5-phospho-alpha-D-ribose 1-diphosphate + uracil. It functions in the pathway pyrimidine metabolism; UMP biosynthesis via salvage pathway; UMP from uracil: step 1/1. Its activity is regulated as follows. Allosterically activated by GTP. Its function is as follows. Catalyzes the conversion of uracil and 5-phospho-alpha-D-ribose 1-diphosphate (PRPP) to UMP and diphosphate. The sequence is that of Uracil phosphoribosyltransferase from Pseudomonas paraeruginosa (strain DSM 24068 / PA7) (Pseudomonas aeruginosa (strain PA7)).